The primary structure comprises 694 residues: Methionine--tRNA ligase (694 aa).

Residues 12 to 22 (PYANGPLHLGH) carry the 'HIGH' region motif. Cysteine 143, cysteine 146, cysteine 156, and cysteine 159 together coordinate Zn(2+). Residues 330 to 334 (KMSKS) carry the 'KMSKS' region motif. Lysine 333 lines the ATP pocket. The disordered stretch occupies residues 552–577 (APAAPAATTKPAPSKADAAPAAVANP). The 104-residue stretch at 591–694 (DFAKLDLRIG…AGAQPGMPVR (104 aa)) folds into the tRNA-binding domain.

This sequence belongs to the class-I aminoacyl-tRNA synthetase family. MetG type 1 subfamily. In terms of assembly, homodimer. Zn(2+) is required as a cofactor.

The protein resides in the cytoplasm. The catalysed reaction is tRNA(Met) + L-methionine + ATP = L-methionyl-tRNA(Met) + AMP + diphosphate. In terms of biological role, is required not only for elongation of protein synthesis but also for the initiation of all mRNA translation through initiator tRNA(fMet) aminoacylation. The chain is Methionine--tRNA ligase from Xanthomonas campestris pv. campestris (strain B100).